Here is a 978-residue protein sequence, read N- to C-terminus: uncharacterized protein (978 aa).

Residues 1–27 form the signal peptide; it reads MHSWKKKLVVSQLALACTLAITSQANA. The region spanning 713–978 is the Autotransporter domain; the sequence is GLADNGGAWV…SANVGVKYTW (266 aa).

This is an uncharacterized protein from Salmonella typhimurium (strain LT2 / SGSC1412 / ATCC 700720).